Reading from the N-terminus, the 199-residue chain is Probable GTP-binding protein EngB (199 aa).

An EngB-type G domain is found at 28–199 (DLPEIALAGR…ESWDTILEYL (172 aa)). Residues 36 to 43 (GRSNVGKS), 63 to 67 (GKTQL), 81 to 84 (DVPG), 148 to 151 (TKAD), and 180 to 182 (FSS) each bind GTP. Residues Ser-43 and Thr-65 each coordinate Mg(2+).

This sequence belongs to the TRAFAC class TrmE-Era-EngA-EngB-Septin-like GTPase superfamily. EngB GTPase family. Mg(2+) serves as cofactor.

In terms of biological role, necessary for normal cell division and for the maintenance of normal septation. This Streptococcus equi subsp. zooepidemicus (strain H70) protein is Probable GTP-binding protein EngB.